Consider the following 625-residue polypeptide: Chaperone protein HtpG (625 aa).

The interval 1–341 (MGKRKFKAES…SEDLSLNISR (341 aa)) is a; substrate-binding. The segment at 342–551 (EMLQHDRQLK…DGEISLEMEK (210 aa)) is b. Positions 552 to 625 (IINAMPDDQQ…FTNDICKVMV (74 aa)) are c.

The protein belongs to the heat shock protein 90 family. In terms of assembly, homodimer.

The protein resides in the cytoplasm. Its function is as follows. Molecular chaperone. Has ATPase activity. The chain is Chaperone protein HtpG from Oceanobacillus iheyensis (strain DSM 14371 / CIP 107618 / JCM 11309 / KCTC 3954 / HTE831).